The primary structure comprises 333 residues: Electron transfer flavoprotein subunit alpha, mitochondrial (333 aa).

A mitochondrion-targeting transit peptide spans 1–19 (MFRAAAPGQLRRAASSLRF). Positions 20 to 204 (QSTLVIAEHA…EISEWLDQKL (185 aa)) are domain I. Residue Lys59 is modified to N6-acetyllysine; alternate. Lys59 is modified (N6-succinyllysine; alternate). Lys62 carries the post-translational modification N6-acetyllysine. Lys69 carries the post-translational modification N6-acetyllysine; alternate. N6-succinyllysine; alternate is present on Lys69. An N6-acetyllysine modification is found at Lys75. Thr93 is subject to Phosphothreonine. An N6-acetyllysine mark is found at Lys101 and Lys139. Residue Ser140 is modified to Phosphoserine. At Lys158 the chain carries N6-acetyllysine; alternate. Lys158 is modified (N6-succinyllysine; alternate). Lys164 is subject to N6-acetyllysine. The residue at position 187 (Lys187) is an N6-succinyllysine. Lys203 bears the N6-acetyllysine; alternate mark. Lys203 is subject to N6-succinyllysine; alternate. Residues 205-333 (TKSDRPELTG…PEMTEILKKK (129 aa)) form a domain II region. N6-succinyllysine is present on Lys216. Arg223 lines the FAD pocket. N6-acetyllysine; alternate is present on residues Lys226 and Lys232. 2 positions are modified to N6-succinyllysine; alternate: Lys226 and Lys232. Residues Ser248, 263 to 266 (VGQT), 281 to 286 (SGAIQH), and Asn300 each bind FAD. An N6-succinyllysine modification is found at Lys301. Position 318–319 (318–319 (DL)) interacts with FAD.

This sequence belongs to the ETF alpha-subunit/FixB family. In terms of assembly, heterodimer composed of ETFA and ETFB. Identified in a complex that contains ETFA, ETFB and ETFRF1. Interaction with ETFRF1 promotes dissociation of the bound FAD and loss of electron transfer activity. Interacts with TASOR. The cofactor is FAD.

It is found in the mitochondrion matrix. Functionally, heterodimeric electron transfer flavoprotein that accepts electrons from several mitochondrial dehydrogenases, including acyl-CoA dehydrogenases, glutaryl-CoA and sarcosine dehydrogenase. It transfers the electrons to the main mitochondrial respiratory chain via ETF-ubiquinone oxidoreductase (ETF dehydrogenase). Required for normal mitochondrial fatty acid oxidation and normal amino acid metabolism. This is Electron transfer flavoprotein subunit alpha, mitochondrial (ETFA) from Macaca fascicularis (Crab-eating macaque).